We begin with the raw amino-acid sequence, 261 residues long: RING-H2 finger protein ATL58 (261 aa).

A helical transmembrane segment spans residues 25-45 (AFIFSVPICFTFIILFLFYLI). An RING-type; atypical zinc finger spans residues 100-142 (CSVCLGDYQPNDKLQQIPVCKHTFHMDCIDLWLTSHTTCPLCR). Disordered regions lie at residues 149–227 (RSRQ…NDGH) and 241–261 (MEEDERNNIGTSSACCSCRTG). A compositionally biased stretch (polar residues) spans 194–221 (SGVSSQPESQPVVNHRGVSSQPESQPVN).

This sequence belongs to the RING-type zinc finger family. ATL subfamily.

Its subcellular location is the membrane. It catalyses the reaction S-ubiquitinyl-[E2 ubiquitin-conjugating enzyme]-L-cysteine + [acceptor protein]-L-lysine = [E2 ubiquitin-conjugating enzyme]-L-cysteine + N(6)-ubiquitinyl-[acceptor protein]-L-lysine.. It functions in the pathway protein modification; protein ubiquitination. This Arabidopsis thaliana (Mouse-ear cress) protein is RING-H2 finger protein ATL58 (ATL58).